A 220-amino-acid polypeptide reads, in one-letter code: Ras-related protein Rab-11B (220 aa).

Residue 18–25 (GDSGVGKS) participates in GTP binding. An Effector region motif is present at residues 40–48 (KLSTIGVEF). GTP is bound by residues 66–70 (DTAGQ) and 124–127 (NKSD). S-geranylgeranyl cysteine attachment occurs at residues Cys219 and Cys220.

It belongs to the small GTPase superfamily. Rab family.

It is found in the cell membrane. The chain is Ras-related protein Rab-11B (rab11B) from Dictyostelium discoideum (Social amoeba).